We begin with the raw amino-acid sequence, 272 residues long: Ribosomal RNA small subunit methyltransferase A (272 aa).

Residues asparagine 18, leucine 20, glycine 45, glutamate 66, aspartate 91, and asparagine 113 each contribute to the S-adenosyl-L-methionine site.

This sequence belongs to the class I-like SAM-binding methyltransferase superfamily. rRNA adenine N(6)-methyltransferase family. RsmA subfamily.

It is found in the cytoplasm. It carries out the reaction adenosine(1518)/adenosine(1519) in 16S rRNA + 4 S-adenosyl-L-methionine = N(6)-dimethyladenosine(1518)/N(6)-dimethyladenosine(1519) in 16S rRNA + 4 S-adenosyl-L-homocysteine + 4 H(+). Functionally, specifically dimethylates two adjacent adenosines (A1518 and A1519) in the loop of a conserved hairpin near the 3'-end of 16S rRNA in the 30S particle. May play a critical role in biogenesis of 30S subunits. This chain is Ribosomal RNA small subunit methyltransferase A, found in Pectobacterium atrosepticum (strain SCRI 1043 / ATCC BAA-672) (Erwinia carotovora subsp. atroseptica).